The following is a 325-amino-acid chain: tRNA(Ile)-lysidine synthase (325 aa).

34–39 contributes to the ATP binding site; it reads SGGADS.

The protein belongs to the tRNA(Ile)-lysidine synthase family.

It localises to the cytoplasm. It catalyses the reaction cytidine(34) in tRNA(Ile2) + L-lysine + ATP = lysidine(34) in tRNA(Ile2) + AMP + diphosphate + H(+). Functionally, ligates lysine onto the cytidine present at position 34 of the AUA codon-specific tRNA(Ile) that contains the anticodon CAU, in an ATP-dependent manner. Cytidine is converted to lysidine, thus changing the amino acid specificity of the tRNA from methionine to isoleucine. This chain is tRNA(Ile)-lysidine synthase, found in Rhodococcus erythropolis (strain PR4 / NBRC 100887).